We begin with the raw amino-acid sequence, 93 residues long: UPF0298 protein lwe2074 (93 aa).

It belongs to the UPF0298 family.

Its subcellular location is the cytoplasm. The chain is UPF0298 protein lwe2074 from Listeria welshimeri serovar 6b (strain ATCC 35897 / DSM 20650 / CCUG 15529 / CIP 8149 / NCTC 11857 / SLCC 5334 / V8).